Reading from the N-terminus, the 332-residue chain is Delta-aminolevulinic acid dehydratase (332 aa).

Catalysis depends on Lys-202, which acts as the Schiff-base intermediate with substrate. Arg-212 and Lys-225 together coordinate 5-aminolevulinate. The active-site Schiff-base intermediate with substrate is Lys-256. Positions 282 and 321 each coordinate 5-aminolevulinate.

The protein belongs to the ALAD family. As to quaternary structure, homohexamer.

It carries out the reaction 2 5-aminolevulinate = porphobilinogen + 2 H2O + H(+). Its pathway is porphyrin-containing compound metabolism; protoporphyrin-IX biosynthesis; coproporphyrinogen-III from 5-aminolevulinate: step 1/4. Its function is as follows. Catalyzes an early step in the biosynthesis of tetrapyrroles. Binds two molecules of 5-aminolevulinate per subunit, each at a distinct site, and catalyzes their condensation to form porphobilinogen. This is Delta-aminolevulinic acid dehydratase (hemB) from Rhodobacter capsulatus (Rhodopseudomonas capsulata).